We begin with the raw amino-acid sequence, 361 residues long: Diacylglycerol O-acyltransferase 2 (361 aa).

Topologically, residues 1 to 42 (MKTIIAAYSGVLRGTGSSLLSAVHDLPNIPWLSKSSVVRHLQ) are cytoplasmic. A helical membrane pass occupies residues 43–61 (IISVLQWVLSFLILGVACT). Residues 62–65 (AVLV) are Lumenal-facing. The helical transmembrane segment at 66-85 (YIFCTDLWLIAALYLTWMVL) threads the bilayer. Topologically, residues 86 to 361 (DWNTPYKGGR…LHDSEMLEIV (276 aa)) are cytoplasmic.

Belongs to the diacylglycerol acyltransferase family.

It is found in the endoplasmic reticulum membrane. It localises to the lipid droplet. The protein localises to the cytoplasm. The protein resides in the perinuclear region. The enzyme catalyses an acyl-CoA + a 1,2-diacyl-sn-glycerol = a triacyl-sn-glycerol + CoA. It catalyses the reaction all-trans-retinol + an acyl-CoA = an all-trans-retinyl ester + CoA. The catalysed reaction is 2-(9Z-octadecenoyl)-glycerol + (9Z)-octadecenoyl-CoA = 1,2-di-(9Z-octadecenoyl)-sn-glycerol + CoA. It carries out the reaction 1,2-di-(9Z-octadecenoyl)-sn-glycerol + (9Z)-octadecenoyl-CoA = 1,2,3-tri-(9Z-octadecenoyl)-glycerol + CoA. The enzyme catalyses all-trans-retinol + hexadecanoyl-CoA = all-trans-retinyl hexadecanoate + CoA. It catalyses the reaction 1-O-(9Z-octadecenyl)-glycerol + (9Z)-octadecenoyl-CoA = 1-O-(9Z-octadecyl)-3-(9Z-octadecenoyl)-glycerol + CoA. The catalysed reaction is 1-(9Z-octadecenoyl)-glycerol + (9Z)-octadecenoyl-CoA = 1,2-di-(9Z-octadecenoyl)-glycerol + CoA. It carries out the reaction 1,2-di-(9Z-octadecenoyl)-sn-glycerol + hexadecanoyl-CoA = 1,2-di-(9Z)-octadecenoyl-3-hexadecanoyl-sn-glycerol + CoA. The enzyme catalyses 1,3-di-(9Z-octadecenoyl)-glycerol + (9Z)-octadecenoyl-CoA = 1,2,3-tri-(9Z-octadecenoyl)-glycerol + CoA. It catalyses the reaction 2,3-di-(9Z)-octadecenoyl-sn-glycerol + (9Z)-octadecenoyl-CoA = 1,2,3-tri-(9Z-octadecenoyl)-glycerol + CoA. The catalysed reaction is 2-(9Z-octadecenoyl)-glycerol + hexadecanoyl-CoA = 1-hexadecanoyl-2-(9Z-octadecenoyl)-sn-glycerol + CoA. Its pathway is glycerolipid metabolism; triacylglycerol biosynthesis. Functionally, essential acyltransferase that catalyzes the terminal and only committed step in triacylglycerol synthesis by using diacylglycerol and fatty acyl CoA as substrates. Required for synthesis and storage of intracellular triglycerides. Probably plays a central role in cytosolic lipid accumulation. This is Diacylglycerol O-acyltransferase 2 (dgat2) from Xenopus tropicalis (Western clawed frog).